A 124-amino-acid polypeptide reads, in one-letter code: MAIAKEDILAAVEGMTVLELNELVKAFEEKFGVSAAAVAVAGPAGGGAAAAAEEKTEFTVVLAEAGANKVSVIKAVRELTGLGLKEAKDLVDGAPKPIKEGVDKAAAEEAKKKLEEAGAKVEVK.

The protein belongs to the bacterial ribosomal protein bL12 family. In terms of assembly, homodimer. Part of the ribosomal stalk of the 50S ribosomal subunit. Forms a multimeric L10(L12)X complex, where L10 forms an elongated spine to which 2 to 4 L12 dimers bind in a sequential fashion. Binds GTP-bound translation factors.

Forms part of the ribosomal stalk which helps the ribosome interact with GTP-bound translation factors. Is thus essential for accurate translation. The polypeptide is Large ribosomal subunit protein bL12 (Burkholderia cenocepacia (strain ATCC BAA-245 / DSM 16553 / LMG 16656 / NCTC 13227 / J2315 / CF5610) (Burkholderia cepacia (strain J2315))).